A 175-amino-acid chain; its full sequence is Shikimate kinase (175 aa).

Residue 12-19 (GGRASGKS) participates in ATP binding.

This sequence belongs to the shikimate kinase family.

The protein resides in the cytoplasm. The catalysed reaction is shikimate + ATP = 3-phosphoshikimate + ADP + H(+). The protein operates within metabolic intermediate biosynthesis; chorismate biosynthesis; chorismate from D-erythrose 4-phosphate and phosphoenolpyruvate: step 5/7. The protein is Shikimate kinase of Nitratidesulfovibrio vulgaris (strain ATCC 29579 / DSM 644 / CCUG 34227 / NCIMB 8303 / VKM B-1760 / Hildenborough) (Desulfovibrio vulgaris).